Here is a 319-residue protein sequence, read N- to C-terminus: Mitochondrial fission regulator 1-like (319 aa).

The interval 1-35 (MASLGAGAEPESVLFGKDGTEACESPEGRRSGRRK) is disordered.

It belongs to the MTFR1 family.

It localises to the mitochondrion outer membrane. Mitochondrial protein required for adaptation of miochondrial dynamics to metabolic changes. Regulates mitochondrial morphology at steady state and mediates AMPK-dependent stress-induced mitochondrial fragmentation via the control of OPA1 levels. In Xenopus tropicalis (Western clawed frog), this protein is Mitochondrial fission regulator 1-like (mtfr1l).